Here is a 512-residue protein sequence, read N- to C-terminus: Cobyric acid synthase (512 aa).

Residues 254 to 455 enclose the GATase cobBQ-type domain; it reads EIDIAVVKLP…LHGLFDNKAL (202 aa). The active-site Nucleophile is cysteine 335. The active site involves histidine 447.

It belongs to the CobB/CobQ family. CobQ subfamily.

Its pathway is cofactor biosynthesis; adenosylcobalamin biosynthesis. Functionally, catalyzes amidations at positions B, D, E, and G on adenosylcobyrinic A,C-diamide. NH(2) groups are provided by glutamine, and one molecule of ATP is hydrogenolyzed for each amidation. The sequence is that of Cobyric acid synthase from Desulforamulus reducens (strain ATCC BAA-1160 / DSM 100696 / MI-1) (Desulfotomaculum reducens).